The sequence spans 310 residues: Ribose-phosphate pyrophosphokinase (310 aa).

ATP is bound by residues 34–36 (DQE) and 93–94 (RQ). Mg(2+) is bound by residues histidine 127 and aspartate 167. The active site involves lysine 190. D-ribose 5-phosphate contacts are provided by residues arginine 192, aspartate 216, and 220–224 (DSGGT).

This sequence belongs to the ribose-phosphate pyrophosphokinase family. Class I subfamily. As to quaternary structure, homohexamer. Mg(2+) is required as a cofactor.

The protein resides in the cytoplasm. It carries out the reaction D-ribose 5-phosphate + ATP = 5-phospho-alpha-D-ribose 1-diphosphate + AMP + H(+). The protein operates within metabolic intermediate biosynthesis; 5-phospho-alpha-D-ribose 1-diphosphate biosynthesis; 5-phospho-alpha-D-ribose 1-diphosphate from D-ribose 5-phosphate (route I): step 1/1. Functionally, involved in the biosynthesis of the central metabolite phospho-alpha-D-ribosyl-1-pyrophosphate (PRPP) via the transfer of pyrophosphoryl group from ATP to 1-hydroxyl of ribose-5-phosphate (Rib-5-P). This Rhizobium meliloti (strain 1021) (Ensifer meliloti) protein is Ribose-phosphate pyrophosphokinase.